Consider the following 92-residue polypeptide: Neuropeptide F (92 aa).

Residues 1–27 form the signal peptide; the sequence is MSQSRPLALLVVAALVAAAVLVAAAEA. The propeptide occupies 28–51; that stretch reads QQADGNKLEGLADALKYLQELDRY. The residue at position 60 (Phe-60) is a Phenylalanine amide. Residues 64-92 constitute a propeptide that is removed on maturation; the sequence is AELRPDVVDDVIPEEMSADKFWRRFARRR.

This sequence belongs to the NPY family. In terms of tissue distribution, widely expressed in the nervous system. Expressed in corpora cardiaca, hypocerebral ganglion, frontal ganglion, protocerebrum, antennal lobe, tritocerebrum and thoracic ganglia. Not detected in corpora allata, pars intercerebralis, circumesophageal connectives, subesophageal ganglion, abdominal ganglion and abdominal perisympathetic organs.

It is found in the secreted. Accelerates ovarian maturation in females. In Locusta migratoria (Migratory locust), this protein is Neuropeptide F.